The following is a 213-amino-acid chain: Endoplasmic reticulum vesicle protein 25 (213 aa).

The first 20 residues, 1–20 (MILRIPSLLYLFTLLTAVYA), serve as a signal peptide directing secretion. The Lumenal portion of the chain corresponds to 21-181 (VKFDLTSDRN…TNESTNQRVK (161 aa)). The GOLD domain occupies 33–122 (PKCIWNFASA…VRSVELDVDI (90 aa)). Residues 182–202 (VFSVLIICCTIGLGVWQLLHL) form a helical membrane-spanning segment. At 203 to 213 (RSFFKRKYLID) the chain is on the cytoplasmic side.

Belongs to the EMP24/GP25L family.

It is found in the endoplasmic reticulum membrane. The protein localises to the golgi apparatus membrane. Its function is as follows. Constituent of COPII-coated endoplasmic reticulum-derived transport vesicles. Required for efficient transport of a subset of secretory proteins to the Golgi. Facilitates retrograde transport from the Golgi to the endoplasmic reticulum. This Cryptococcus neoformans var. neoformans serotype D (strain JEC21 / ATCC MYA-565) (Filobasidiella neoformans) protein is Endoplasmic reticulum vesicle protein 25 (ERV25).